The chain runs to 144 residues: Cytochrome c oxidase subunit 4 isoform 1, mitochondrial (144 aa).

The Mitochondrial matrix segment spans residues 1 to 73 (SVVKSEDYAL…SFAEMNRGSN (73 aa)). Lys4 carries the post-translational modification N6-acetyllysine; alternate. Lys4 is subject to N6-succinyllysine; alternate. A phosphoserine mark is found at Ser31 and Ser33. Lys35 bears the N6-acetyllysine; alternate mark. Residue Lys35 is modified to N6-succinyllysine; alternate. An N6-acetyllysine modification is found at Lys42. Residues 74–99 (EWKTVVGAAMFFIGFTAILIILEKRY) form a helical membrane-spanning segment. Residues 100–144 (VYGPLPHTFDKEWVAMQTKRMLDLKVNPVDGLASKWDYDKKEWKK) are Mitochondrial intermembrane-facing.

The protein belongs to the cytochrome c oxidase IV family. In terms of assembly, component of the cytochrome c oxidase (complex IV, CIV), a multisubunit enzyme composed of 14 subunits. The complex is composed of a catalytic core of 3 subunits MT-CO1, MT-CO2 and MT-CO3, encoded in the mitochondrial DNA, and 11 supernumerary subunits COX4I, COX5A, COX5B, COX6A, COX6B, COX6C, COX7A, COX7B, COX7C, COX8 and NDUFA4, which are encoded in the nuclear genome. The complex exists as a monomer or a dimer and forms supercomplexes (SCs) in the inner mitochondrial membrane with NADH-ubiquinone oxidoreductase (complex I, CI) and ubiquinol-cytochrome c oxidoreductase (cytochrome b-c1 complex, complex III, CIII), resulting in different assemblies (supercomplex SCI(1)III(2)IV(1) and megacomplex MCI(2)III(2)IV(2)). Interacts with PHB2; the interaction decreases in absence of SPHK2. Interacts with AFG1L. Interacts with ABCB7; this interaction allows the regulation of cellular iron homeostasis and cellular reactive oxygen species (ROS) levels in cardiomyocytes. Interacts with FLVCR2; this interaction occurs in the absence of heme and is disrupted upon heme binding. Interacts with IRGC.

The protein resides in the mitochondrion inner membrane. It functions in the pathway energy metabolism; oxidative phosphorylation. In terms of biological role, component of the cytochrome c oxidase, the last enzyme in the mitochondrial electron transport chain which drives oxidative phosphorylation. The respiratory chain contains 3 multisubunit complexes succinate dehydrogenase (complex II, CII), ubiquinol-cytochrome c oxidoreductase (cytochrome b-c1 complex, complex III, CIII) and cytochrome c oxidase (complex IV, CIV), that cooperate to transfer electrons derived from NADH and succinate to molecular oxygen, creating an electrochemical gradient over the inner membrane that drives transmembrane transport and the ATP synthase. Cytochrome c oxidase is the component of the respiratory chain that catalyzes the reduction of oxygen to water. Electrons originating from reduced cytochrome c in the intermembrane space (IMS) are transferred via the dinuclear copper A center (CU(A)) of subunit 2 and heme A of subunit 1 to the active site in subunit 1, a binuclear center (BNC) formed by heme A3 and copper B (CU(B)). The BNC reduces molecular oxygen to 2 water molecules using 4 electrons from cytochrome c in the IMS and 4 protons from the mitochondrial matrix. This is Cytochrome c oxidase subunit 4 isoform 1, mitochondrial (COX4I1) from Aotus azarae (Azara's night monkey).